A 125-amino-acid polypeptide reads, in one-letter code: Large ribosomal subunit protein bL12 (125 aa).

Belongs to the bacterial ribosomal protein bL12 family. As to quaternary structure, homodimer. Part of the ribosomal stalk of the 50S ribosomal subunit. Forms a multimeric L10(L12)X complex, where L10 forms an elongated spine to which 2 to 4 L12 dimers bind in a sequential fashion. Binds GTP-bound translation factors.

Its function is as follows. Forms part of the ribosomal stalk which helps the ribosome interact with GTP-bound translation factors. Is thus essential for accurate translation. The chain is Large ribosomal subunit protein bL12 from Helicobacter acinonychis (strain Sheeba).